A 127-amino-acid polypeptide reads, in one-letter code: Aspartate 1-decarboxylase (127 aa).

S25 functions as the Schiff-base intermediate with substrate; via pyruvic acid in the catalytic mechanism. S25 carries the post-translational modification Pyruvic acid (Ser). Substrate is bound at residue T57. The Proton donor role is filled by Y58. 73–75 (GAA) is a substrate binding site.

It belongs to the PanD family. As to quaternary structure, heterooctamer of four alpha and four beta subunits. It depends on pyruvate as a cofactor. Post-translationally, is synthesized initially as an inactive proenzyme, which is activated by self-cleavage at a specific serine bond to produce a beta-subunit with a hydroxyl group at its C-terminus and an alpha-subunit with a pyruvoyl group at its N-terminus.

Its subcellular location is the cytoplasm. The catalysed reaction is L-aspartate + H(+) = beta-alanine + CO2. The protein operates within cofactor biosynthesis; (R)-pantothenate biosynthesis; beta-alanine from L-aspartate: step 1/1. Its function is as follows. Catalyzes the pyruvoyl-dependent decarboxylation of aspartate to produce beta-alanine. This chain is Aspartate 1-decarboxylase, found in Clostridium botulinum (strain Okra / Type B1).